Reading from the N-terminus, the 454-residue chain is UDP-N-acetylmuramate--L-alanine ligase (454 aa).

An ATP-binding site is contributed by 112-118 (GTHGKTT).

This sequence belongs to the MurCDEF family.

The protein resides in the cytoplasm. It catalyses the reaction UDP-N-acetyl-alpha-D-muramate + L-alanine + ATP = UDP-N-acetyl-alpha-D-muramoyl-L-alanine + ADP + phosphate + H(+). It functions in the pathway cell wall biogenesis; peptidoglycan biosynthesis. Functionally, cell wall formation. This chain is UDP-N-acetylmuramate--L-alanine ligase, found in Nitratidesulfovibrio vulgaris (strain ATCC 29579 / DSM 644 / CCUG 34227 / NCIMB 8303 / VKM B-1760 / Hildenborough) (Desulfovibrio vulgaris).